The following is a 519-amino-acid chain: T-complex protein 11-like protein 2 (519 aa).

Residues methionine 1–proline 57 are disordered. Serine 16 carries the post-translational modification Phosphoserine. 2 stretches are compositionally biased toward low complexity: residues aspartate 17 to serine 29 and serine 36 to serine 55.

The protein belongs to the TCP11 family. Interacts with FMNL2; this interaction promotes muscle-derived satellite cell (MDSC) migration and differentiation.

Its subcellular location is the cytoplasm. It is found in the cytoskeleton. Its function is as follows. Promotes the migration of muscle-derived satellite cells (MDSCs) during differentiation throught interaction with FMNL2 and therefore may participate in microfilament assembly. This is T-complex protein 11-like protein 2 from Bos taurus (Bovine).